A 128-amino-acid chain; its full sequence is MAYSEKVIDHYENPRNVGSFDNNDENVGSGMVGAPACGDVMKLQIKVNDEGIIEDARFKTYGCGSAIASSSLVTEWVKGKSLDEAQAIKNTDIAEELELPPVKIHCSILAEDAIKAAIADYKSKREAK.

It belongs to the NifU family. In terms of assembly, forms a heterotetramer with IscS; each subunit of the IscS dimer contacts an IscU monomer. Certain pairs of proteins can bind simultaneously to IscS; IscS-IscU-CyaY and IscS-IscU-IscX complexes can be isolated in vitro, but others (IscS-IscU-TusA) cannot. IscU can displace TusA from IscS.

Its function is as follows. A scaffold on which IscS assembles Fe-S clusters. Subsequently gives the nascent cluster to other proteins. It is likely that Fe-S cluster coordination is flexible as the role of this complex is to build and then hand off Fe-S clusters. The polypeptide is Iron-sulfur cluster assembly scaffold protein IscU (iscU) (Escherichia coli O157:H7).